The primary structure comprises 494 residues: Aspartyl/glutamyl-tRNA(Asn/Gln) amidotransferase subunit B (494 aa).

The protein belongs to the GatB/GatE family. GatB subfamily. In terms of assembly, heterotrimer of A, B and C subunits.

It carries out the reaction L-glutamyl-tRNA(Gln) + L-glutamine + ATP + H2O = L-glutaminyl-tRNA(Gln) + L-glutamate + ADP + phosphate + H(+). The catalysed reaction is L-aspartyl-tRNA(Asn) + L-glutamine + ATP + H2O = L-asparaginyl-tRNA(Asn) + L-glutamate + ADP + phosphate + 2 H(+). Functionally, allows the formation of correctly charged Asn-tRNA(Asn) or Gln-tRNA(Gln) through the transamidation of misacylated Asp-tRNA(Asn) or Glu-tRNA(Gln) in organisms which lack either or both of asparaginyl-tRNA or glutaminyl-tRNA synthetases. The reaction takes place in the presence of glutamine and ATP through an activated phospho-Asp-tRNA(Asn) or phospho-Glu-tRNA(Gln). This Rhizorhabdus wittichii (strain DSM 6014 / CCUG 31198 / JCM 15750 / NBRC 105917 / EY 4224 / RW1) (Sphingomonas wittichii) protein is Aspartyl/glutamyl-tRNA(Asn/Gln) amidotransferase subunit B.